A 758-amino-acid chain; its full sequence is Matrix metalloproteinase-2 (758 aa).

An N-terminal signal peptide occupies residues 1 to 17 (MFSKYVLATLLALFAQS). Histidine 257 provides a ligand contact to Zn(2+). Residue glutamate 258 is part of the active site. Residues histidine 261 and histidine 267 each coordinate Zn(2+). Residues 335–514 (AYWPWNNPSN…HNKPRKPKPD (180 aa)) form a disordered region. Residues 338–348 (PWNNPSNNPNN) show a composition bias toward low complexity. Residues 349–476 (DRNRARERQE…EWERRNRNGA (128 aa)) show a composition bias toward basic and acidic residues. Residues 479–494 (PVTPTANTTPRPTNKP) show a composition bias toward low complexity. The segment covering 499 to 510 (HRQHHHHNKPRK) has biased composition (basic residues). Hemopexin repeat units follow at residues 513 to 561 (PDSC…WSAL), 565 to 610 (LTKV…GLPP), 612 to 659 (LTHI…WSGV), and 660 to 707 (GYNI…WMQC). Cysteine 516 and cysteine 707 are oxidised to a cystine. A helical transmembrane segment spans residues 739-756 (LRINHFILSILLLAIANW). Topologically, residues 757-758 (RS) are cytoplasmic.

It belongs to the peptidase M10A family. The cofactor is Ca(2+). Requires Zn(2+) as cofactor. As to expression, widely expressed during embryogenesis including in the mesoderm, developing gut, central and peripheral nervous systems and imaginal disks. In the embryonic nervous system, expressed in neurons and glia. In third instar larvae, strongly expressed in the morphogenetic furrow of eye imaginal disks and in the optic lobe region of the brain. Expressed in posterior follicle cells in all mature stage 14 follicles but not in earlier follicles and is also expressed in some anterior follicle cells that help form dorsal eggshell structures.

The protein resides in the cell membrane. In terms of biological role, has metalloproteinase activity. Proteolytically cleaves the PGRP-LC receptor; involved in gut-fat body innate immunological communication (GFIC)-mediated activation of the imd/Relish signal transduction pathway. Required for larval tissue histolysis during metamorphosis and is involved in pupal head eversion and fusion of the wing imaginal tissue. Required for growth of the dorsal air sac primordium and development of the dorsal air sacs. Promotes embryonic motor axon fasciculation. Cleaves and activates frac to promote motor axon bundling during outgrowth. Promotes the reshaping of adult sensory neuron dendrites from a radial to lattice-like shape which occurs after eclosion by degrading the basement membrane on which the dendrites grow. Involved in inhibition of follicle stem cell proliferation by cleaving Dlp, inhibiting its interaction with wg and preventing Dlp-mediated spreading of wg to follicle stem cells to enhance their proliferation. Plays a role in wound healing. Involved in fat body dissociation which occurs during metamorphosis by degrading basement membrane components, leading to destruction of cell-basement membrane junctions. Required for posterior follicle cell degradation and ovulation. This is Matrix metalloproteinase-2 from Drosophila melanogaster (Fruit fly).